The chain runs to 121 residues: Prefoldin subunit beta (121 aa).

The protein belongs to the prefoldin subunit beta family. As to quaternary structure, heterohexamer of two alpha and four beta subunits.

It localises to the cytoplasm. Its function is as follows. Molecular chaperone capable of stabilizing a range of proteins. Seems to fulfill an ATP-independent, HSP70-like function in archaeal de novo protein folding. The chain is Prefoldin subunit beta from Methanosphaerula palustris (strain ATCC BAA-1556 / DSM 19958 / E1-9c).